Consider the following 277-residue polypeptide: Small ribosomal subunit protein uS3 (277 aa).

Residues 43-111 (IRELMSKGMD…QIQLNILEVK (69 aa)) form the KH type-2 domain. Residues 217-277 (AAQQAAAPSS…AEANNAEGGK (61 aa)) form a disordered region. Basic and acidic residues predominate over residues 245–258 (NDRNDRGGRRERDS). Low complexity predominate over residues 259 to 277 (AAAPQQNSAAEANNAEGGK).

Belongs to the universal ribosomal protein uS3 family. As to quaternary structure, part of the 30S ribosomal subunit. Forms a tight complex with proteins S10 and S14.

Binds the lower part of the 30S subunit head. Binds mRNA in the 70S ribosome, positioning it for translation. This Kocuria rhizophila (strain ATCC 9341 / DSM 348 / NBRC 103217 / DC2201) protein is Small ribosomal subunit protein uS3.